The chain runs to 123 residues: Alpha-lactalbumin B/C (123 aa).

Residues lysine 1–leucine 123 enclose the C-type lysozyme domain. 4 disulfides stabilise this stretch: cysteine 6-cysteine 120, cysteine 28-cysteine 111, cysteine 61-cysteine 77, and cysteine 73-cysteine 91. Ca(2+) contacts are provided by lysine 79, aspartate 82, aspartate 84, aspartate 87, and aspartate 88.

It belongs to the glycosyl hydrolase 22 family. As to quaternary structure, lactose synthase (LS) is a heterodimer of a catalytic component, beta1,4-galactosyltransferase (beta4Gal-T1) and a regulatory component, alpha-lactalbumin (LA). Mammary gland specific. Secreted in milk.

The protein resides in the secreted. In terms of biological role, regulatory subunit of lactose synthase, changes the substrate specificity of galactosyltransferase in the mammary gland making glucose a good acceptor substrate for this enzyme. This enables LS to synthesize lactose, the major carbohydrate component of milk. In other tissues, galactosyltransferase transfers galactose onto the N-acetylglucosamine of the oligosaccharide chains in glycoproteins. This chain is Alpha-lactalbumin B/C, found in Equus caballus (Horse).